The chain runs to 166 residues: Cyclin-dependent kinase 4 inhibitor D (166 aa).

Position 1 is an N-acetylmethionine (M1). ANK repeat units lie at residues F41–V69, S73–A102, T106–R135, and S138–P165.

Belongs to the CDKN2 cyclin-dependent kinase inhibitor family. Interacts with CDK6.

Its subcellular location is the nucleus. It is found in the cytoplasm. Interacts strongly with CDK4 and CDK6 and inhibits them. The sequence is that of Cyclin-dependent kinase 4 inhibitor D (Cdkn2d) from Mus musculus (Mouse).